A 926-amino-acid polypeptide reads, in one-letter code: Probable Xaa-Pro aminopeptidase PTT_10145 (926 aa).

Residues Asp274, Asp285, Glu435, and Glu476 each contribute to the Mn(2+) site. Disordered regions lie at residues 505 to 538 (GNPGTTEILNPSPTPPRRMRSENRTPRLRAPGIS), 595 to 615 (KRDSVPTAPSRPTKAKNLSPV), 668 to 696 (SSSTQTSPKPMTVPTFESRQKSHTVEEKH), 711 to 741 (IGQSNRAIGPEERRRKAQSDHHHHSRLKAAT), and 865 to 926 (MPVL…FLTR). The segment covering 506 to 515 (NPGTTEILNP) has biased composition (polar residues). Composition is skewed to basic and acidic residues over residues 685–696 (SRQKSHTVEEKH) and 719–730 (GPEERRRKAQSD). The segment covering 887–897 (NNATNKRSMID) has biased composition (polar residues). The segment covering 900–915 (PAERRTRPERPERPAR) has biased composition (basic and acidic residues).

This sequence belongs to the peptidase M24B family. It depends on Mn(2+) as a cofactor.

The enzyme catalyses Release of any N-terminal amino acid, including proline, that is linked to proline, even from a dipeptide or tripeptide.. Its function is as follows. Catalyzes the removal of a penultimate prolyl residue from the N-termini of peptides. The chain is Probable Xaa-Pro aminopeptidase PTT_10145 from Pyrenophora teres f. teres (strain 0-1) (Barley net blotch fungus).